We begin with the raw amino-acid sequence, 397 residues long: Enoyl-[acyl-carrier-protein] reductase [NADH] (397 aa).

Residues 48–53 (GASTGY), 74–75 (FE), 111–112 (DA), and 139–140 (VA) contribute to the NAD(+) site. Tyr225 contacts substrate. Tyr235 functions as the Proton donor in the catalytic mechanism. NAD(+) is bound by residues Lys244 and 273–275 (VVT).

It belongs to the TER reductase family. In terms of assembly, monomer.

It carries out the reaction a 2,3-saturated acyl-[ACP] + NAD(+) = a (2E)-enoyl-[ACP] + NADH + H(+). Its pathway is lipid metabolism; fatty acid biosynthesis. Involved in the final reduction of the elongation cycle of fatty acid synthesis (FAS II). Catalyzes the reduction of a carbon-carbon double bond in an enoyl moiety that is covalently linked to an acyl carrier protein (ACP). This chain is Enoyl-[acyl-carrier-protein] reductase [NADH], found in Burkholderia thailandensis (strain ATCC 700388 / DSM 13276 / CCUG 48851 / CIP 106301 / E264).